The chain runs to 153 residues: Ribosomal RNA large subunit methyltransferase H (153 aa).

S-adenosyl-L-methionine-binding positions include L70, G102, and 121–126 (FSKMTF).

It belongs to the RNA methyltransferase RlmH family. Homodimer.

Its subcellular location is the cytoplasm. The enzyme catalyses pseudouridine(1915) in 23S rRNA + S-adenosyl-L-methionine = N(3)-methylpseudouridine(1915) in 23S rRNA + S-adenosyl-L-homocysteine + H(+). In terms of biological role, specifically methylates the pseudouridine at position 1915 (m3Psi1915) in 23S rRNA. The protein is Ribosomal RNA large subunit methyltransferase H of Desulfotalea psychrophila (strain LSv54 / DSM 12343).